A 104-amino-acid chain; its full sequence is Flagellar hook-basal body complex protein FliE (104 aa).

It belongs to the FliE family.

It is found in the bacterial flagellum basal body. The sequence is that of Flagellar hook-basal body complex protein FliE from Salmonella arizonae (strain ATCC BAA-731 / CDC346-86 / RSK2980).